Consider the following 183-residue polypeptide: Bifunctional protein PyrR (183 aa).

Residues 42–43, arginine 87, 104–112, arginine 137, and valine 161 each bind substrate; these read TR and DDVLYTGRT. Positions 100–112 match the PRPP-binding motif; that stretch reads VILVDDVLYTGRT.

This sequence belongs to the purine/pyrimidine phosphoribosyltransferase family. PyrR subfamily.

The enzyme catalyses UMP + diphosphate = 5-phospho-alpha-D-ribose 1-diphosphate + uracil. Its function is as follows. Regulates the transcription of the pyrimidine nucleotide (pyr) operon in response to exogenous pyrimidines. In terms of biological role, also displays a weak uracil phosphoribosyltransferase activity which is not physiologically significant. The sequence is that of Bifunctional protein PyrR from Deinococcus radiodurans (strain ATCC 13939 / DSM 20539 / JCM 16871 / CCUG 27074 / LMG 4051 / NBRC 15346 / NCIMB 9279 / VKM B-1422 / R1).